The following is a 166-amino-acid chain: NAD(P)H-quinone oxidoreductase subunit I, chloroplastic (166 aa).

2 4Fe-4S ferredoxin-type domains span residues Gly55–Lys84 and Leu95–Glu124. 8 residues coordinate [4Fe-4S] cluster: Cys64, Cys67, Cys70, Cys74, Cys104, Cys107, Cys110, and Cys114.

The protein belongs to the complex I 23 kDa subunit family. In terms of assembly, NDH is composed of at least 16 different subunits, 5 of which are encoded in the nucleus. [4Fe-4S] cluster is required as a cofactor.

It is found in the plastid. Its subcellular location is the chloroplast thylakoid membrane. The enzyme catalyses a plastoquinone + NADH + (n+1) H(+)(in) = a plastoquinol + NAD(+) + n H(+)(out). It carries out the reaction a plastoquinone + NADPH + (n+1) H(+)(in) = a plastoquinol + NADP(+) + n H(+)(out). NDH shuttles electrons from NAD(P)H:plastoquinone, via FMN and iron-sulfur (Fe-S) centers, to quinones in the photosynthetic chain and possibly in a chloroplast respiratory chain. The immediate electron acceptor for the enzyme in this species is believed to be plastoquinone. Couples the redox reaction to proton translocation, and thus conserves the redox energy in a proton gradient. The chain is NAD(P)H-quinone oxidoreductase subunit I, chloroplastic from Enydra sessilis (Smallray swampwort).